The chain runs to 124 residues: Iron-sulfur cluster insertion protein ErpA (124 aa).

3 residues coordinate iron-sulfur cluster: Cys52, Cys116, and Cys118.

The protein belongs to the HesB/IscA family. Homodimer. Iron-sulfur cluster is required as a cofactor.

Its function is as follows. Required for insertion of 4Fe-4S clusters for at least IspG. In Acidithiobacillus ferrooxidans (strain ATCC 23270 / DSM 14882 / CIP 104768 / NCIMB 8455) (Ferrobacillus ferrooxidans (strain ATCC 23270)), this protein is Iron-sulfur cluster insertion protein ErpA.